A 245-amino-acid chain; its full sequence is Orotidine 5'-phosphate decarboxylase (245 aa).

Substrate-binding positions include Asp22, Lys44, 71–80, Thr131, Arg192, Gln201, Gly221, and Arg222; that span reads DLKFHDIPNT. Catalysis depends on Lys73, which acts as the Proton donor.

The protein belongs to the OMP decarboxylase family. Type 1 subfamily. Homodimer.

The enzyme catalyses orotidine 5'-phosphate + H(+) = UMP + CO2. The protein operates within pyrimidine metabolism; UMP biosynthesis via de novo pathway; UMP from orotate: step 2/2. Its function is as follows. Catalyzes the decarboxylation of orotidine 5'-monophosphate (OMP) to uridine 5'-monophosphate (UMP). This is Orotidine 5'-phosphate decarboxylase from Escherichia coli O45:K1 (strain S88 / ExPEC).